Reading from the N-terminus, the 891-residue chain is DNA polymerase I (891 aa).

The 5'-3' exonuclease domain occupies 1–313; sequence MEQPVIKEGT…LLDNTPALDN (313 aa). The region spanning 314 to 488 is the 3'-5' exonuclease domain; the sequence is TPKKSCMIVL…RLCEYFEKGG (175 aa). The polymerase stretch occupies residues 492–890; it reads NLLSLAREIE…FIAKRWNELK (399 aa).

It belongs to the DNA polymerase type-A family. Single-chain monomer with multiple functions.

It carries out the reaction DNA(n) + a 2'-deoxyribonucleoside 5'-triphosphate = DNA(n+1) + diphosphate. Its function is as follows. In addition to polymerase activity, this DNA polymerase exhibits 3'-5' and 5'-3' exonuclease activity. The protein is DNA polymerase I (polA) of Helicobacter pylori (strain ATCC 700392 / 26695) (Campylobacter pylori).